Reading from the N-terminus, the 270-residue chain is Glutamate racemase (270 aa).

Substrate contacts are provided by residues 7 to 8 (DS) and 39 to 40 (YG). Cys-70 functions as the Proton donor/acceptor in the catalytic mechanism. Residue 71 to 72 (NT) coordinates substrate. Residue Cys-194 is the Proton donor/acceptor of the active site. Position 195–196 (195–196 (TH)) interacts with substrate.

It belongs to the aspartate/glutamate racemases family.

The catalysed reaction is L-glutamate = D-glutamate. Its pathway is cell wall biogenesis; peptidoglycan biosynthesis. Provides the (R)-glutamate required for cell wall biosynthesis. This is Glutamate racemase from Jannaschia sp. (strain CCS1).